The primary structure comprises 326 residues: MLTFARQQQRRNVRWLLSLSLLVLLATLLSLCAGEQWIAPGDWLSARGELFVWQIRLPRTLAVLLVGAALALSGAVMQALFENPLAEPGLLGVSNGAGVGLIAAVLLGQGQLPGWALGLCAIAGALIITLILLRFARRHLSTSRLLLAGVALGIICSALMTWAIYFSTSFDLRQLMYWMMGGFGGVDWQQSWLMIALIPVLIWICCQSQPLNMLALGETSARQLGLPLWFWRNLLVIATGWMVGVSVAMAGAIGFIGLVIPHILRLCGLTDHRVLLPGCALAGAIALLLADVVARLALASAELPIGVVTATLGAPVFIWLLLKSAR.

The next 9 membrane-spanning stretches (helical) occupy residues 15-35 (WLLS…CAGE), 61-81 (LAVL…QALF), 88-108 (PGLL…VLLG), 112-132 (LPGW…TLIL), 146-166 (LLAG…AIYF), 184-204 (GGVD…LIWI), 240-260 (GWMV…GLVI), 274-294 (VLLP…DVVA), and 302-322 (ELPI…WLLL).

The protein belongs to the binding-protein-dependent transport system permease family. FecCD subfamily. In terms of assembly, the complex is composed of two ATP-binding proteins (BtuD), two transmembrane proteins (BtuC) and a solute-binding protein (BtuF).

The protein resides in the cell inner membrane. In terms of biological role, part of the ABC transporter complex BtuCDF involved in vitamin B12 import. Involved in the translocation of the substrate across the membrane. This chain is Vitamin B12 import system permease protein BtuC, found in Salmonella enteritidis PT4 (strain P125109).